The sequence spans 363 residues: tRNA N6-adenosine threonylcarbamoyltransferase (363 aa).

Fe cation contacts are provided by H121 and H125. Residues 143 to 147 (LASGG), D176, G189, and N287 each bind substrate. Position 315 (D315) interacts with Fe cation.

This sequence belongs to the KAE1 / TsaD family. Fe(2+) serves as cofactor.

Its subcellular location is the cytoplasm. It catalyses the reaction L-threonylcarbamoyladenylate + adenosine(37) in tRNA = N(6)-L-threonylcarbamoyladenosine(37) in tRNA + AMP + H(+). Functionally, required for the formation of a threonylcarbamoyl group on adenosine at position 37 (t(6)A37) in tRNAs that read codons beginning with adenine. Is involved in the transfer of the threonylcarbamoyl moiety of threonylcarbamoyl-AMP (TC-AMP) to the N6 group of A37, together with TsaE and TsaB. TsaD likely plays a direct catalytic role in this reaction. In Rhodopseudomonas palustris (strain BisB5), this protein is tRNA N6-adenosine threonylcarbamoyltransferase.